The sequence spans 91 residues: UPF0250 protein NMA1380 (91 aa).

It belongs to the UPF0250 family.

This Neisseria meningitidis serogroup A / serotype 4A (strain DSM 15465 / Z2491) protein is UPF0250 protein NMA1380.